Consider the following 189-residue polypeptide: Protein GrpE (189 aa).

The segment covering 1–12 (MDKKKHGSHAGA) has biased composition (basic residues). The segment at 1–36 (MDKKKHGSHAGAHHTDEPAAETVAPAAEGAPAAADR) is disordered. Residues 20–34 (AETVAPAAEGAPAAA) are compositionally biased toward low complexity.

This sequence belongs to the GrpE family. In terms of assembly, homodimer.

The protein localises to the cytoplasm. Its function is as follows. Participates actively in the response to hyperosmotic and heat shock by preventing the aggregation of stress-denatured proteins, in association with DnaK and GrpE. It is the nucleotide exchange factor for DnaK and may function as a thermosensor. Unfolded proteins bind initially to DnaJ; upon interaction with the DnaJ-bound protein, DnaK hydrolyzes its bound ATP, resulting in the formation of a stable complex. GrpE releases ADP from DnaK; ATP binding to DnaK triggers the release of the substrate protein, thus completing the reaction cycle. Several rounds of ATP-dependent interactions between DnaJ, DnaK and GrpE are required for fully efficient folding. The polypeptide is Protein GrpE (Geobacter metallireducens (strain ATCC 53774 / DSM 7210 / GS-15)).